Here is a 452-residue protein sequence, read N- to C-terminus: Phosphoglucosamine mutase (452 aa).

Serine 97 serves as the catalytic Phosphoserine intermediate. Residues serine 97, aspartate 236, aspartate 238, and aspartate 240 each contribute to the Mg(2+) site. The residue at position 97 (serine 97) is a Phosphoserine.

The protein belongs to the phosphohexose mutase family. The cofactor is Mg(2+). Activated by phosphorylation.

The catalysed reaction is alpha-D-glucosamine 1-phosphate = D-glucosamine 6-phosphate. Its function is as follows. Catalyzes the conversion of glucosamine-6-phosphate to glucosamine-1-phosphate. The chain is Phosphoglucosamine mutase from Prochlorococcus marinus subsp. pastoris (strain CCMP1986 / NIES-2087 / MED4).